Consider the following 99-residue polypeptide: MDPVDPNLEPWNHPGSQPRTPCNKCHCKKCCYHCPVCFLNKGLGISYGRKKRRQRRGPPQGGQAHQVPIPKQPSSQPRGDPTGPKEQKKKVESEAETDP.

The tract at residues 1 to 22 (MDPVDPNLEPWNHPGSQPRTPC) is disordered. Residues 1 to 24 (MDPVDPNLEPWNHPGSQPRTPCNK) are interaction with human CREBBP. The segment at 1 to 48 (MDPVDPNLEPWNHPGSQPRTPCNKCHCKKCCYHCPVCFLNKGLGISYG) is transactivation. Cys22, Cys25, and Cys27 together coordinate Zn(2+). Residues 22–37 (CNKCHCKKCCYHCPVC) are cysteine-rich. N6-acetyllysine; by host PCAF is present on Lys28. 4 residues coordinate Zn(2+): Cys30, His33, Cys34, and Cys37. The core stretch occupies residues 38–48 (FLNKGLGISYG). Residues 48–99 (GRKKRRQRRGPPQGGQAHQVPIPKQPSSQPRGDPTGPKEQKKKVESEAETDP) form a disordered region. The Nuclear localization signal, RNA-binding (TAR), and protein transduction motif lies at 49–57 (RKKRRQRRG). The tract at residues 49–86 (RKKRRQRRGPPQGGQAHQVPIPKQPSSQPRGDPTGPKE) is interaction with the host capping enzyme RNGTT. N6-acetyllysine; by host EP300 and GCN5L2 occurs at positions 50 and 51. Residues Arg52 and Arg53 each carry the asymmetric dimethylarginine; by host PRMT6 modification. Lys71 is covalently cross-linked (Glycyl lysine isopeptide (Lys-Gly) (interchain with G-Cter in ubiquitin)). Positions 78–80 (RGD) match the Cell attachment site motif. Basic and acidic residues predominate over residues 83-93 (GPKEQKKKVES).

This sequence belongs to the lentiviruses Tat family. As to quaternary structure, interacts with host CCNT1. Associates with the P-TEFb complex composed at least of Tat, P-TEFb (CDK9 and CCNT1), TAR RNA, RNA Pol II. Recruits the HATs CREBBP, TAF1/TFIID, EP300, PCAF and GCN5L2. Interacts with host KAT5/Tip60; this interaction targets the latter to degradation. Interacts with the host deacetylase SIRT1. Interacts with host capping enzyme RNGTT; this interaction stimulates RNGTT. Binds to host KDR, and to the host integrins ITGAV/ITGB3 and ITGA5/ITGB1. Interacts with host KPNB1/importin beta-1 without previous binding to KPNA1/importin alpha-1. Interacts with EIF2AK2. Interacts with host nucleosome assembly protein NAP1L1; this interaction may be required for the transport of Tat within the nucleus, since the two proteins interact at the nuclear rim. Interacts with host C1QBP/SF2P32; this interaction involves lysine-acetylated Tat. Interacts with the host chemokine receptors CCR2, CCR3 and CXCR4. Interacts with host DPP4/CD26; this interaction may trigger an anti-proliferative effect. Interacts with host LDLR. Interacts with the host extracellular matrix metalloproteinase MMP1. Interacts with host PRMT6; this interaction mediates Tat's methylation. Interacts with, and is ubiquitinated by MDM2/Hdm2. Interacts with host PSMC3 and HTATIP2. Interacts with STAB1; this interaction may overcome SATB1-mediated repression of IL2 and IL2RA (interleukin) in T cells by binding to the same domain than HDAC1. Interacts (when acetylated) with human CDK13, thereby increasing HIV-1 mRNA splicing and promoting the production of the doubly spliced HIV-1 protein Nef. Interacts with host TBP; this interaction modulates the activity of transcriptional pre-initiation complex. Interacts with host RELA. Interacts with host PLSCR1; this interaction negatively regulates Tat transactivation activity by altering its subcellular distribution. In terms of processing, asymmetrical arginine methylation by host PRMT6 seems to diminish the transactivation capacity of Tat and affects the interaction with host CCNT1. Post-translationally, acetylation by EP300, CREBBP, GCN5L2/GCN5 and PCAF regulates the transactivation activity of Tat. EP300-mediated acetylation of Lys-50 promotes dissociation of Tat from the TAR RNA through the competitive binding to PCAF's bromodomain. In addition, the non-acetylated Tat's N-terminus can also interact with PCAF. PCAF-mediated acetylation of Lys-28 enhances Tat's binding to CCNT1. Lys-50 is deacetylated by SIRT1. Polyubiquitination by host MDM2 does not target Tat to degradation, but activates its transactivation function and fosters interaction with CCNT1 and TAR RNA. In terms of processing, phosphorylated by EIF2AK2 on serine and threonine residues adjacent to the basic region important for TAR RNA binding and function. Phosphorylation of Tat by EIF2AK2 is dependent on the prior activation of EIF2AK2 by dsRNA.

It localises to the host nucleus. Its subcellular location is the host nucleolus. The protein localises to the host cytoplasm. It is found in the secreted. In terms of biological role, transcriptional activator that increases RNA Pol II processivity, thereby increasing the level of full-length viral transcripts. Recognizes a hairpin structure at the 5'-LTR of the nascent viral mRNAs referred to as the transactivation responsive RNA element (TAR) and recruits the cyclin T1-CDK9 complex (P-TEFb complex) that will in turn hyperphosphorylate the RNA polymerase II to allow efficient elongation. The CDK9 component of P-TEFb and other Tat-activated kinases hyperphosphorylate the C-terminus of RNA Pol II that becomes stabilized and much more processive. Other factors such as HTATSF1/Tat-SF1, SUPT5H/SPT5, and HTATIP2 are also important for Tat's function. Besides its effect on RNA Pol II processivity, Tat induces chromatin remodeling of proviral genes by recruiting the histone acetyltransferases (HATs) CREBBP, EP300 and PCAF to the chromatin. This also contributes to the increase in proviral transcription rate, especially when the provirus integrates in transcriptionally silent region of the host genome. To ensure maximal activation of the LTR, Tat mediates nuclear translocation of NF-kappa-B by interacting with host RELA. Through its interaction with host TBP, Tat may also modulate transcription initiation. Tat can reactivate a latently infected cell by penetrating in it and transactivating its LTR promoter. In the cytoplasm, Tat is thought to act as a translational activator of HIV-1 mRNAs. Extracellular circulating Tat can be endocytosed by surrounding uninfected cells via the binding to several surface receptors such as CD26, CXCR4, heparan sulfate proteoglycans (HSPG) or LDLR. Neurons are rarely infected, but they internalize Tat via their LDLR. Through its interaction with nuclear HATs, Tat is potentially able to control the acetylation-dependent cellular gene expression. Modulates the expression of many cellular genes involved in cell survival, proliferation or in coding for cytokines or cytokine receptors. Tat plays a role in T-cell and neurons apoptosis. Tat induced neurotoxicity and apoptosis probably contribute to neuroAIDS. Circulating Tat also acts as a chemokine-like and/or growth factor-like molecule that binds to specific receptors on the surface of the cells, affecting many cellular pathways. In the vascular system, Tat binds to ITGAV/ITGB3 and ITGA5/ITGB1 integrins dimers at the surface of endothelial cells and competes with bFGF for heparin-binding sites, leading to an excess of soluble bFGF. This chain is Protein Tat, found in Homo sapiens (Human).